Consider the following 393-residue polypeptide: S-adenosylmethionine synthase (393 aa).

A Mg(2+)-binding site is contributed by Glu-9. His-15 contributes to the ATP binding site. Glu-43 lines the K(+) pocket. 2 residues coordinate L-methionine: Glu-56 and Gln-99. Residues 167-169, 235-238, Asp-246, 252-253, Ala-269, Lys-273, and Lys-277 contribute to the ATP site; these read DGK, SGRF, and RK. Asp-246 serves as a coordination point for L-methionine. Residue Lys-277 participates in L-methionine binding.

This sequence belongs to the AdoMet synthase family. As to quaternary structure, homotetramer. The cofactor is Mn(2+). Mg(2+) serves as cofactor. It depends on Co(2+) as a cofactor. Requires K(+) as cofactor.

It localises to the cytoplasm. It catalyses the reaction L-methionine + ATP + H2O = S-adenosyl-L-methionine + phosphate + diphosphate. It participates in amino-acid biosynthesis; S-adenosyl-L-methionine biosynthesis; S-adenosyl-L-methionine from L-methionine: step 1/1. In terms of biological role, catalyzes the formation of S-adenosylmethionine from methionine and ATP. The reaction comprises two steps that are both catalyzed by the same enzyme: formation of S-adenosylmethionine (AdoMet) and triphosphate, and subsequent hydrolysis of the triphosphate. The protein is S-adenosylmethionine synthase (SAMS) of Solanum palustre (Non-tuber-performing potato).